Consider the following 658-residue polypeptide: Transcription factor E2-alpha (658 aa).

Disordered regions lie at residues 42 to 82 (STQF…GTHY), 140 to 191 (SALS…YPAN), 276 to 313 (NPSV…GTAT), 331 to 372 (DHSS…SYDG), 460 to 558 (VPAQ…ERRV), and 628 to 658 (EEEK…VGHM). The Nuclear localization signal signature appears at 173–179 (PKKVRKV). Residues 276 to 303 (NPSVTSSFSSTPAQYGVSSHTPPISTGD) are compositionally biased toward polar residues. Over residues 333–344 (SSTNFSSTPSTP) the composition is skewed to low complexity. Residues 345 to 355 (VGSPQGITGSG) are compositionally biased toward polar residues. Residues 493 to 507 (PDIKRESKEDEENRS) show a composition bias toward basic and acidic residues. The segment covering 533–544 (QDEDEDEDDDNL) has biased composition (acidic residues). A compositionally biased stretch (basic and acidic residues) spans 548 to 558 (QKAEREKERRV). Residues 555 to 608 (ERRVANNARERLRVKDINEAFKELGRMCQLHLNSEKPQTKLLILHQAVSVILSL) enclose the bHLH domain.

Homodimer. Heterodimer; efficient DNA binding requires dimerization with another bHLH protein. Interacts with tgfb1i1.

It localises to the nucleus. Transcriptional regulator involved in the initiation of neuronal differentiation and mesenchymal to epithelial transition. Heterodimers between tcf3 and tissue-specific basic helix-loop-helix (bHLH) proteins play major roles in determining tissue-specific cell fate during embryogenesis, like muscle or early B-cell differentiation. Together with tcf15, required for the mesenchymal to epithelial transition. Dimers bind DNA on E-box motifs: 5'-CANNTG-3'. The chain is Transcription factor E2-alpha (tcf3) from Xenopus laevis (African clawed frog).